Reading from the N-terminus, the 329-residue chain is Porphobilinogen deaminase (329 aa).

At Cys250 the chain carries S-(dipyrrolylmethanemethyl)cysteine.

Belongs to the HMBS family. In terms of assembly, monomer. The cofactor is dipyrromethane.

It catalyses the reaction 4 porphobilinogen + H2O = hydroxymethylbilane + 4 NH4(+). It participates in porphyrin-containing compound metabolism; protoporphyrin-IX biosynthesis; coproporphyrinogen-III from 5-aminolevulinate: step 2/4. In terms of biological role, tetrapolymerization of the monopyrrole PBG into the hydroxymethylbilane pre-uroporphyrinogen in several discrete steps. This is Porphobilinogen deaminase from Burkholderia pseudomallei (strain 668).